Here is a 117-residue protein sequence, read N- to C-terminus: LIM and senescent cell antigen-like-containing domain protein 3 (117 aa).

The region spanning 70–117 is the LIM zinc-binding domain; the sequence is ATCERCKGGFAPAETIVNSNGELYHEQCFVCAQCFQQFPEGLFYEERT.

As to expression, detected in testis.

The protein localises to the cytoplasm. This is LIM and senescent cell antigen-like-containing domain protein 3 (LIMS3) from Homo sapiens (Human).